A 1066-amino-acid polypeptide reads, in one-letter code: Isoleucine--tRNA ligase (1066 aa).

A 'HIGH' region motif is present at residues 49–59; sequence PYVSGAIHLGT. A 'KMSKS' region motif is present at residues 625–629; it reads KMSKS. Lys-628 is an ATP binding site.

The protein belongs to the class-I aminoacyl-tRNA synthetase family. IleS type 2 subfamily. In terms of assembly, monomer. The cofactor is Zn(2+).

It localises to the cytoplasm. The enzyme catalyses tRNA(Ile) + L-isoleucine + ATP = L-isoleucyl-tRNA(Ile) + AMP + diphosphate. In terms of biological role, catalyzes the attachment of isoleucine to tRNA(Ile). As IleRS can inadvertently accommodate and process structurally similar amino acids such as valine, to avoid such errors it has two additional distinct tRNA(Ile)-dependent editing activities. One activity is designated as 'pretransfer' editing and involves the hydrolysis of activated Val-AMP. The other activity is designated 'posttransfer' editing and involves deacylation of mischarged Val-tRNA(Ile). The polypeptide is Isoleucine--tRNA ligase (Pyrococcus furiosus (strain ATCC 43587 / DSM 3638 / JCM 8422 / Vc1)).